A 140-amino-acid chain; its full sequence is Small ribosomal subunit protein eS12 (140 aa).

This sequence belongs to the eukaryotic ribosomal protein eS12 family. As to quaternary structure, part of the small subunit (SSU) processome, composed of more than 70 proteins and the RNA chaperone small nucleolar RNA (snoRNA) U3. Subunit of the 40S ribosomal complex.

It localises to the nucleus. Its subcellular location is the nucleolus. Part of the small subunit (SSU) processome, first precursor of the small eukaryotic ribosomal subunit. During the assembly of the SSU processome in the nucleolus, many ribosome biogenesis factors, an RNA chaperone and ribosomal proteins associate with the nascent pre-rRNA and work in concert to generate RNA folding, modifications, rearrangements and cleavage as well as targeted degradation of pre-ribosomal RNA by the RNA exosome. Subunit of the 40S ribosomal complex. Involved in cold-warm shock-induced translocation of the RNA exosome components from the nucleolus to nucleoplasm. The protein is Small ribosomal subunit protein eS12 (rps-12) of Caenorhabditis elegans.